The chain runs to 181 residues: 28 kDa heat- and acid-stable phosphoprotein (181 aa).

Basic residues predominate over residues 1-14; that stretch reads MPKGGRKGGHKGRA. The segment at 1–117 is disordered; that stretch reads MPKGGRKGGH…SRREREEIEK (117 aa). Thr18 carries the post-translational modification Phosphothreonine. Ser19 bears the Phosphoserine mark. A compositionally biased stretch (basic and acidic residues) spans 30–59; the sequence is EKQKAREEEEQKEGGDGAAGDPKKEKKSLD. Residue Lys52 forms a Glycyl lysine isopeptide (Lys-Gly) (interchain with G-Cter in SUMO2) linkage. Ser57, Ser60, and Ser63 each carry phosphoserine. Positions 60–69 are enriched in acidic residues; sequence SDESEDEEDD. The residue at position 70 (Tyr70) is a Phosphotyrosine. Over residues 102–117 the composition is skewed to basic and acidic residues; the sequence is DGPKELSRREREEIEK. The residue at position 126 (Lys126) is an N6-methyllysine. An N6-acetyllysine mark is found at Lys132 and Lys164. Residues 151 to 167 show a composition bias toward basic and acidic residues; that stretch reads EEAARKKEEERKAKDDA. Residues 151–181 form a disordered region; that stretch reads EEAARKKEEERKAKDDATLSGKRMQSLSLNK. A phosphoserine mark is found at Ser176 and Ser178.

The protein belongs to the PDAP1 family.

Enhances PDGFA-stimulated cell growth in fibroblasts, but inhibits the mitogenic effect of PDGFB. In Homo sapiens (Human), this protein is 28 kDa heat- and acid-stable phosphoprotein (PDAP1).